A 393-amino-acid chain; its full sequence is Phosphoglycerate kinase (393 aa).

Substrate contacts are provided by residues 21-23 (DLN), R36, 59-62 (HLGR), R113, and R146. Residues K197, E319, and 345–348 (GGDT) each bind ATP.

Belongs to the phosphoglycerate kinase family. As to quaternary structure, monomer.

It localises to the cytoplasm. It catalyses the reaction (2R)-3-phosphoglycerate + ATP = (2R)-3-phospho-glyceroyl phosphate + ADP. It functions in the pathway carbohydrate degradation; glycolysis; pyruvate from D-glyceraldehyde 3-phosphate: step 2/5. In Nitratidesulfovibrio vulgaris (strain DP4) (Desulfovibrio vulgaris), this protein is Phosphoglycerate kinase.